Reading from the N-terminus, the 140-residue chain is uncharacterized protein (140 aa).

The tract at residues 34–88 (PLRWRNRARNREKPHSPRAVSSPATHSLPPSNPCRLTPTLSSARPREGSCPSKCS) is disordered.

As to expression, expressed in a range of cell lines, including B-cell lymphoma and prostate.

This is an uncharacterized protein from Homo sapiens (Human).